A 370-amino-acid polypeptide reads, in one-letter code: MAVKRDYYEVLGVQRNASQDEIKKAFRRLARQYHPDVNKAPDAEAKFKEINEAYEVLSDPEKRSMYDRFGHAGPTAAPGFDPFASADPFSSIFETFFGGTMRGTQRGPQRGADLRYTLSISFEEAIFGVEKTIEYRRMETCPACRGSGAEPGTEPVRCPKCGGLGEIRQRAPLFNMVTVTTCDMCRGEGTVIAIPCRECRGEGRIRQTRKITVRVPPGVDSSAQIRISGEGDAGPRGGPYGNLYVVIDVQPHPFFIREGNDIILELPLNVAQAALGTEVDVPTIEGTERLHIPPGVQNGAVFRIRGKGAPFLRSSGRGDQIVVVRVVVPTNLNDHQRRLFEELARSLENEPIGNQRDEGFFGRIKNALGL.

In terms of domain architecture, J spans 6–70; it reads DYYEVLGVQR…EKRSMYDRFG (65 aa). The CR-type zinc-finger motif lies at 128 to 208; that stretch reads GVEKTIEYRR…CRGEGRIRQT (81 aa). Zn(2+) is bound by residues Cys141, Cys144, Cys158, Cys161, Cys182, Cys185, Cys196, and Cys199. CXXCXGXG motif repeat units lie at residues 141-148, 158-165, 182-189, and 196-203; these read CPACRGSG, CPKCGGLG, CDMCRGEG, and CRECRGEG.

The protein belongs to the DnaJ family. In terms of assembly, homodimer. The cofactor is Zn(2+).

It is found in the cytoplasm. Its function is as follows. Participates actively in the response to hyperosmotic and heat shock by preventing the aggregation of stress-denatured proteins and by disaggregating proteins, also in an autonomous, DnaK-independent fashion. Unfolded proteins bind initially to DnaJ; upon interaction with the DnaJ-bound protein, DnaK hydrolyzes its bound ATP, resulting in the formation of a stable complex. GrpE releases ADP from DnaK; ATP binding to DnaK triggers the release of the substrate protein, thus completing the reaction cycle. Several rounds of ATP-dependent interactions between DnaJ, DnaK and GrpE are required for fully efficient folding. Also involved, together with DnaK and GrpE, in the DNA replication of plasmids through activation of initiation proteins. The polypeptide is Chaperone protein DnaJ (Roseiflexus castenholzii (strain DSM 13941 / HLO8)).